Consider the following 447-residue polypeptide: GTPase Der (447 aa).

2 consecutive EngA-type G domains span residues 4–165 and 180–357; these read QIIT…PEEE and LQIV…KIWN. GTP is bound by residues 10–17, 57–61, 119–122, 186–193, 233–237, and 298–301; these read GRPNVGKS, DTPGL, NKCE, GRPNAGKS, DTAGL, and NKWD. Residues 358-443 enclose the KH-like domain; it reads KKITTSKLNE…PIRFIYVKTK (86 aa).

It belongs to the TRAFAC class TrmE-Era-EngA-EngB-Septin-like GTPase superfamily. EngA (Der) GTPase family. In terms of assembly, associates with the 50S ribosomal subunit.

GTPase that plays an essential role in the late steps of ribosome biogenesis. This chain is GTPase Der, found in Rickettsia peacockii (strain Rustic).